The sequence spans 635 residues: Multiple inositol polyphosphate phosphatase 1 (635 aa).

The signal sequence occupies residues 1 to 23 (MMVKIKNIIILFCIFGLLSNVSS). The Extracellular portion of the chain corresponds to 24–565 (LSSSSSSSQS…GNDSHSKKSS (542 aa)). The segment at 66 to 102 (KNGDSNSQGDGSSGNSNSNSNSNSNSNSNSDSSNEPP) is disordered. A compositionally biased stretch (low complexity) spans 67-99 (NGDSNSQGDGSSGNSNSNSNSNSNSNSNSDSSN). His-116 is an active-site residue. Low complexity predominate over residues 380 to 421 (SSSSSSSSSSNNGDNSGSNGSSGSGSSTSTSSNDNGSTNNND). A disordered region spans residues 380–425 (SSSSSSSSSSNNGDNSGSNGSSGSGSSTSTSSNDNGSTNNNDNKVE). A helical membrane pass occupies residues 566 to 586 (YFLAIFIPITFLVGGTIGGIF). The Cytoplasmic segment spans residues 587–635 (TYFSYEKIMQVKNRKKLTQYGNDEFISSPKSKSFSFKPTKFDSRSPLIQ). Over residues 614-624 (SPKSKSFSFKP) the composition is skewed to low complexity. Residues 614-635 (SPKSKSFSFKPTKFDSRSPLIQ) form a disordered region.

This sequence belongs to the histidine acid phosphatase family. MINPP1 subfamily.

Its subcellular location is the membrane. It carries out the reaction 1D-myo-inositol hexakisphosphate + H2O = 1D-myo-inositol 1,2,4,5,6-pentakisphosphate + phosphate. The enzyme catalyses 1D-myo-inositol 1,2,4,5,6-pentakisphosphate + H2O = 1D-myo-inositol 1,2,5,6-tetrakisphosphate + phosphate. It catalyses the reaction 1D-myo-inositol 1,2,5,6-tetrakisphosphate + H2O = 1D-myo-inositol 1,2,6-trisphosphate + phosphate. The catalysed reaction is 1D-myo-inositol 1,2,6-trisphosphate + H2O = 1D-myo-inositol 1,2-bisphosphate + phosphate. It carries out the reaction 1D-myo-inositol 1,2-bisphosphate + H2O = 1D-myo-inositol 2-phosphate + phosphate. The enzyme catalyses (2R)-2,3-bisphosphoglycerate + H2O = (2R)-2-phosphoglycerate + phosphate. Its function is as follows. Probable multiple inositol polyphosphate phosphatase that hydrolyzes 1D-myo-inositol 1,3,4,5,6-pentakisphosphate (InsP5[2OH]) and 1D-myo-inositol hexakisphosphate (InsP6) to a range of less phosphorylated inositol phosphates. This regulates the availability of these various small molecule second messengers and metal chelators which control many aspects of cell physiology. May have a dual substrate specificity, and function as a 2,3-bisphosphoglycerate 3-phosphatase hydrolyzing 2,3-bisphosphoglycerate to 2-phosphoglycerate. 2,3-bisphosphoglycerate (BPG) is formed as part of the Rapoport-Luebering glycolytic bypass. In Dictyostelium discoideum (Social amoeba), this protein is Multiple inositol polyphosphate phosphatase 1 (mipp1).